A 50-amino-acid chain; its full sequence is Ornatin-E (50 aa).

The Cell attachment site motif lies at 42–44 (RGD).

Belongs to the ornatin family.

It is found in the secreted. Potent inhibitor of fibrinogen interaction with platelet receptors expressed on glycoprotein IIb-IIIa complex. May prevent blood from clotting during either feeding and/or storage of ingested blood. The chain is Ornatin-E from Placobdella ornata (Turtle leech).